A 386-amino-acid chain; its full sequence is Putative prophage major tail sheath protein (386 aa).

Belongs to the myoviridae tail sheath protein family.

The protein localises to the secreted. The sequence is that of Putative prophage major tail sheath protein from Pseudomonas aeruginosa (strain UCBPP-PA14).